Reading from the N-terminus, the 330-residue chain is uncharacterized protein (330 aa).

An ATP-binding site is contributed by 125–132 (GPPGCGKT).

Belongs to the AAA ATPase family.

This is an uncharacterized protein from Sinorhizobium fredii (strain NBRC 101917 / NGR234).